The chain runs to 384 residues: Glucose-1-phosphate adenylyltransferase (384 aa).

Residues Tyr103, Gly168, 183–184, and Ser194 each bind alpha-D-glucose 1-phosphate; that span reads EK.

The protein belongs to the bacterial/plant glucose-1-phosphate adenylyltransferase family. In terms of assembly, homotetramer.

It carries out the reaction alpha-D-glucose 1-phosphate + ATP + H(+) = ADP-alpha-D-glucose + diphosphate. The protein operates within glycan biosynthesis; glycogen biosynthesis. Functionally, involved in the biosynthesis of ADP-glucose, a building block required for the elongation reactions to produce glycogen. Catalyzes the reaction between ATP and alpha-D-glucose 1-phosphate (G1P) to produce pyrophosphate and ADP-Glc. The protein is Glucose-1-phosphate adenylyltransferase of Fusobacterium nucleatum subsp. nucleatum (strain ATCC 25586 / DSM 15643 / BCRC 10681 / CIP 101130 / JCM 8532 / KCTC 2640 / LMG 13131 / VPI 4355).